Reading from the N-terminus, the 356-residue chain is Chaperone protein DnaJ (356 aa).

One can recognise a J domain in the interval 5–69 (DYYQILGVSK…ERRKEYDRIL (65 aa)). The CR-type zinc finger occupies 121–197 (GCEKDIEYER…CSGRGRVAMH (77 aa)). Residues Cys-134, Cys-137, Cys-151, Cys-154, Cys-171, Cys-174, Cys-185, and Cys-188 each coordinate Zn(2+). CXXCXGXG motif repeat units lie at residues 134–141 (CPTCEGKG), 151–158 (CHACEGTG), 171–178 (CSVCKGRG), and 185–192 (CPACSGRG).

This sequence belongs to the DnaJ family. As to quaternary structure, homodimer. Zn(2+) serves as cofactor.

The protein localises to the cytoplasm. Participates actively in the response to hyperosmotic and heat shock by preventing the aggregation of stress-denatured proteins and by disaggregating proteins, also in an autonomous, DnaK-independent fashion. Unfolded proteins bind initially to DnaJ; upon interaction with the DnaJ-bound protein, DnaK hydrolyzes its bound ATP, resulting in the formation of a stable complex. GrpE releases ADP from DnaK; ATP binding to DnaK triggers the release of the substrate protein, thus completing the reaction cycle. Several rounds of ATP-dependent interactions between DnaJ, DnaK and GrpE are required for fully efficient folding. Also involved, together with DnaK and GrpE, in the DNA replication of plasmids through activation of initiation proteins. This is Chaperone protein DnaJ from Hydrogenobacter thermophilus (strain DSM 6534 / IAM 12695 / TK-6).